The chain runs to 208 residues: Uracil phosphoribosyltransferase (208 aa).

5-phospho-alpha-D-ribose 1-diphosphate is bound by residues Arg78, Arg103, and 130-138 (DPMLATGGS). Residues Ile193 and 198–200 (GDA) contribute to the uracil site. A 5-phospho-alpha-D-ribose 1-diphosphate-binding site is contributed by Asp199.

This sequence belongs to the UPRTase family. Mg(2+) is required as a cofactor.

It catalyses the reaction UMP + diphosphate = 5-phospho-alpha-D-ribose 1-diphosphate + uracil. It participates in pyrimidine metabolism; UMP biosynthesis via salvage pathway; UMP from uracil: step 1/1. With respect to regulation, allosterically activated by GTP. Its function is as follows. Catalyzes the conversion of uracil and 5-phospho-alpha-D-ribose 1-diphosphate (PRPP) to UMP and diphosphate. In Actinobacillus succinogenes (strain ATCC 55618 / DSM 22257 / CCUG 43843 / 130Z), this protein is Uracil phosphoribosyltransferase.